The chain runs to 182 residues: Large ribosomal subunit protein uL16 (182 aa).

A disordered region spans residues 140–182 (EKPTQVGKAPPKSSFLPSDETETAAAQAGTEASSASSVTPLES). The segment covering 162 to 176 (TAAAQAGTEASSASS) has biased composition (low complexity).

Belongs to the universal ribosomal protein uL16 family. As to quaternary structure, part of the 50S ribosomal subunit.

Binds 23S rRNA and is also seen to make contacts with the A and possibly P site tRNAs. The protein is Large ribosomal subunit protein uL16 of Prochlorococcus marinus (strain SARG / CCMP1375 / SS120).